We begin with the raw amino-acid sequence, 391 residues long: Polyketide synthase 3 (391 aa).

Cysteine 164 is a catalytic residue.

Belongs to the thiolase-like superfamily. Chalcone/stilbene synthases family. Homodimer.

It carries out the reaction (E)-4-coumaroyl-CoA + 3 malonyl-CoA + 3 H(+) = 2',4,4',6'-tetrahydroxychalcone + 3 CO2 + 4 CoA. The protein operates within secondary metabolite biosynthesis; flavonoid biosynthesis. In terms of biological role, polyketide synthase producing p-coumaryltriacetic acid lactone (CTAL) and slightly naringenin chalcone. Can use p-coumaryl-CoA as substrate. In Rubus idaeus (Raspberry), this protein is Polyketide synthase 3 (PKS3).